A 150-amino-acid polypeptide reads, in one-letter code: MDSTNSKREFIKSALEANINRRAAVSLFDRFGGSSAVFEKQFQDAQHAVRAHGALKREAELGTLVRKAGQRFEALKRERSILRQPRDLPRVADIDALVDAVADLKEEVAVRLDALEENGEETPTHSSSEIKDTIVRWRLDDLPPVCPETP.

The chain is Protein ORF35 (ORF35) from Homo sapiens (Human).